The chain runs to 412 residues: Serine hydroxymethyltransferase (412 aa).

(6S)-5,6,7,8-tetrahydrofolate-binding positions include Leu117 and 121–123 (GHL). Residue Lys226 is modified to N6-(pyridoxal phosphate)lysine. 349 to 351 (SPF) provides a ligand contact to (6S)-5,6,7,8-tetrahydrofolate.

The protein belongs to the SHMT family. In terms of assembly, homodimer. It depends on pyridoxal 5'-phosphate as a cofactor.

The protein resides in the cytoplasm. It catalyses the reaction (6R)-5,10-methylene-5,6,7,8-tetrahydrofolate + glycine + H2O = (6S)-5,6,7,8-tetrahydrofolate + L-serine. Its pathway is one-carbon metabolism; tetrahydrofolate interconversion. The protein operates within amino-acid biosynthesis; glycine biosynthesis; glycine from L-serine: step 1/1. Its function is as follows. Catalyzes the reversible interconversion of serine and glycine with tetrahydrofolate (THF) serving as the one-carbon carrier. This reaction serves as the major source of one-carbon groups required for the biosynthesis of purines, thymidylate, methionine, and other important biomolecules. Also exhibits THF-independent aldolase activity toward beta-hydroxyamino acids, producing glycine and aldehydes, via a retro-aldol mechanism. This is Serine hydroxymethyltransferase from Nitratidesulfovibrio vulgaris (strain DSM 19637 / Miyazaki F) (Desulfovibrio vulgaris).